A 206-amino-acid polypeptide reads, in one-letter code: LexA repressor (206 aa).

Positions 28 to 48 (RAEIARRLGFKSANAAEEHLK) form a DNA-binding region, H-T-H motif. Active-site for autocatalytic cleavage activity residues include serine 123 and lysine 160.

It belongs to the peptidase S24 family. In terms of assembly, homodimer.

It catalyses the reaction Hydrolysis of Ala-|-Gly bond in repressor LexA.. Represses a number of genes involved in the response to DNA damage (SOS response), including recA and lexA. In the presence of single-stranded DNA, RecA interacts with LexA causing an autocatalytic cleavage which disrupts the DNA-binding part of LexA, leading to derepression of the SOS regulon and eventually DNA repair. The polypeptide is LexA repressor (Shewanella pealeana (strain ATCC 700345 / ANG-SQ1)).